The primary structure comprises 512 residues: Inosine-5'-monophosphate dehydrogenase (512 aa).

CBS domains follow at residues 110 to 169 (FIMK…SAPV) and 173 to 231 (MTRR…PNSS). NAD(+) is bound by residues 268 to 270 (DSS) and 318 to 320 (GMG). K(+) is bound by residues G320 and G322. S323 provides a ligand contact to IMP. Residue C325 participates in K(+) binding. C325 acts as the Thioimidate intermediate in catalysis. Residues 358–360 (DGG), 381–382 (GS), and 405–409 (YRGMG) each bind IMP. R423 functions as the Proton acceptor in the catalytic mechanism. Q435 provides a ligand contact to IMP. The K(+) site is built by E494 and G495. Positions 510 to 512 (SKL) match the Microbody targeting signal motif.

The protein belongs to the IMPDH/GMPR family. As to quaternary structure, homotetramer. K(+) is required as a cofactor.

Its subcellular location is the glycosome. The enzyme catalyses IMP + NAD(+) + H2O = XMP + NADH + H(+). The protein operates within purine metabolism; XMP biosynthesis via de novo pathway; XMP from IMP: step 1/1. Mycophenolic acid (MPA) is a non-competitive inhibitor that prevents formation of the closed enzyme conformation by binding to the same site as the amobile flap. In contrast, mizoribine monophosphate (MZP) is a competitive inhibitor that induces the closed conformation. MPA is a potent inhibitor of mammalian IMPDHs but a poor inhibitor of the bacterial enzymes. MZP is a more potent inhibitor of bacterial IMPDH. In terms of biological role, catalyzes the conversion of inosine 5'-phosphate (IMP) to xanthosine 5'-phosphate (XMP), the first committed and rate-limiting step in the de novo synthesis of guanine nucleotides, and therefore plays an important role in the regulation of cell growth. In Trypanosoma brucei brucei, this protein is Inosine-5'-monophosphate dehydrogenase.